We begin with the raw amino-acid sequence, 111 residues long: Carboxysome shell protein CcmK1 (111 aa).

Positions 4-90 constitute a BMC domain; that stretch reads AVGMIETLGF…PHENLEYVLP (87 aa).

The protein belongs to the bacterial microcompartments protein family. CcmK subfamily. As to quaternary structure, homohexamer. Interacts with full-length CcmM. Forms mixed heterohexamers of all possible stoichiometries with CcmK2, which might form dodecamers. Only very weak interactions with CcmK3 and CcmK4 were seen. Interacts with CcmN and CcmO in the carboxysome.

The protein resides in the carboxysome. One of the shell proteins of the carboxysome, a polyhedral inclusion where RuBisCO (ribulose bisphosphate carboxylase, rbcL-rbcS) is sequestered. Assembles into hexamers which make sheets that form the facets of the polyhedral carboxysome. The hexamer central pore probably regulates metabolite flux. Functionally, probably the major shell protein of the carboxysome, a polyhedral inclusion where RuBisCO (ribulose bisphosphate carboxylase, rbcL-rbcS) is sequestered. The central pore probably regulates metabolite flux. Hexamers make sheets that form the facets of the carboxysome. In Synechocystis sp. (strain ATCC 27184 / PCC 6803 / Kazusa), this protein is Carboxysome shell protein CcmK1.